Here is a 457-residue protein sequence, read N- to C-terminus: Cystathionine beta-lyase (457 aa).

Residues 1–41 (MSTPNSDSPAAQAAKKVFSRLDLDGHNLPPSPAPSSPHNGR) form a disordered region.

Belongs to the trans-sulfuration enzymes family. It depends on pyridoxal 5'-phosphate as a cofactor.

The protein resides in the cytoplasm. The protein localises to the nucleus. It catalyses the reaction L,L-cystathionine + H2O = L-homocysteine + pyruvate + NH4(+). The enzyme catalyses an S-substituted L-cysteine + H2O = a thiol + pyruvate + NH4(+). The protein operates within amino-acid biosynthesis; L-methionine biosynthesis via de novo pathway; L-homocysteine from L-cystathionine: step 1/1. Its function is as follows. Involved in de novo synthesis of methionine. This chain is Cystathionine beta-lyase (met-2), found in Neurospora crassa (strain ATCC 24698 / 74-OR23-1A / CBS 708.71 / DSM 1257 / FGSC 987).